A 275-amino-acid polypeptide reads, in one-letter code: Pyridoxal phosphate homeostasis protein (275 aa).

A Phosphoserine modification is found at serine 6. The residue at position 47 (lysine 47) is an N6-(pyridoxal phosphate)lysine. Residue tyrosine 69 is modified to Phosphotyrosine. Lysine 125 is modified (N6-succinyllysine). Residues serine 226 and serine 244 each carry the phosphoserine modification.

The protein belongs to the pyridoxal phosphate-binding protein YggS/PROSC family.

In terms of biological role, pyridoxal 5'-phosphate (PLP)-binding protein, which may be involved in intracellular homeostatic regulation of pyridoxal 5'-phosphate (PLP), the active form of vitamin B6. In Pongo abelii (Sumatran orangutan), this protein is Pyridoxal phosphate homeostasis protein.